A 142-amino-acid chain; its full sequence is Large ribosomal subunit protein uL13 (142 aa).

Belongs to the universal ribosomal protein uL13 family. In terms of assembly, part of the 50S ribosomal subunit.

Functionally, this protein is one of the early assembly proteins of the 50S ribosomal subunit, although it is not seen to bind rRNA by itself. It is important during the early stages of 50S assembly. The sequence is that of Large ribosomal subunit protein uL13 from Teredinibacter turnerae (strain ATCC 39867 / T7901).